Consider the following 274-residue polypeptide: Large ribosomal subunit protein uL2 (274 aa).

Disordered regions lie at residues 28 to 55 (APHA…RHVG) and 224 to 274 (VAMN…RRRK).

This sequence belongs to the universal ribosomal protein uL2 family. As to quaternary structure, part of the 50S ribosomal subunit. Forms a bridge to the 30S subunit in the 70S ribosome.

One of the primary rRNA binding proteins. Required for association of the 30S and 50S subunits to form the 70S ribosome, for tRNA binding and peptide bond formation. It has been suggested to have peptidyltransferase activity; this is somewhat controversial. Makes several contacts with the 16S rRNA in the 70S ribosome. The polypeptide is Large ribosomal subunit protein uL2 (Pseudomonas putida (strain W619)).